Here is a 193-residue protein sequence, read N- to C-terminus: uncharacterized protein (193 aa).

Residues 119 to 143 (LAGSLLAATGMTLGIFGMGITGTCW) form a helical membrane-spanning segment.

It is found in the mitochondrion membrane. This is an uncharacterized protein from Saccharomyces cerevisiae (strain ATCC 204508 / S288c) (Baker's yeast).